The primary structure comprises 290 residues: F-box protein PP2-A13 (290 aa).

Positions 21-67 constitute an F-box domain; the sequence is RKLRLVDLPENCVALIMTRLDPPEICRLARLNRMFRRASSADFIWES.

Part of a SCF (ASK-cullin-F-box) protein ligase complex. Interacts with SKP1A/ASK1, SKP1B/ASK2, ASK5, ASK11 and ASK13.

The protein resides in the nucleus. The protein operates within protein modification; protein ubiquitination. In terms of biological role, component of SCF(ASK-cullin-F-box) E3 ubiquitin ligase complexes, which may mediate the ubiquitination and subsequent proteasomal degradation of target proteins. The protein is F-box protein PP2-A13 (PP2A13) of Arabidopsis thaliana (Mouse-ear cress).